A 174-amino-acid chain; its full sequence is Crossover junction endodeoxyribonuclease RuvC (174 aa).

Catalysis depends on residues aspartate 8, glutamate 67, and aspartate 139. Mg(2+) is bound by residues aspartate 8, glutamate 67, and aspartate 139.

The protein belongs to the RuvC family. Homodimer which binds Holliday junction (HJ) DNA. The HJ becomes 2-fold symmetrical on binding to RuvC with unstacked arms; it has a different conformation from HJ DNA in complex with RuvA. In the full resolvosome a probable DNA-RuvA(4)-RuvB(12)-RuvC(2) complex forms which resolves the HJ. Requires Mg(2+) as cofactor.

It is found in the cytoplasm. The catalysed reaction is Endonucleolytic cleavage at a junction such as a reciprocal single-stranded crossover between two homologous DNA duplexes (Holliday junction).. Functionally, the RuvA-RuvB-RuvC complex processes Holliday junction (HJ) DNA during genetic recombination and DNA repair. Endonuclease that resolves HJ intermediates. Cleaves cruciform DNA by making single-stranded nicks across the HJ at symmetrical positions within the homologous arms, yielding a 5'-phosphate and a 3'-hydroxyl group; requires a central core of homology in the junction. The consensus cleavage sequence is 5'-(A/T)TT(C/G)-3'. Cleavage occurs on the 3'-side of the TT dinucleotide at the point of strand exchange. HJ branch migration catalyzed by RuvA-RuvB allows RuvC to scan DNA until it finds its consensus sequence, where it cleaves and resolves the cruciform DNA. The polypeptide is Crossover junction endodeoxyribonuclease RuvC (Pseudomonas putida (strain W619)).